Consider the following 948-residue polypeptide: MAQQYQPGQRWISDSEAELGLGTILAQDGRLLTVLYPATGDTRQYSLRNAPLTRVRFSPGDQITHFEGWKLTVREVEDIDGLMVYHGLDGQNQPRTLPETQLSNFIQFRLASDRLFAGQIDPLSWFSLRYNTLQHTSKQMQSALWGLGGCRAQPIAHQLHIAREVADRSAPRVLLADEVGLGKTIEAGLVIHRQLLSGRASRVLILVPENLQHQWLVEMRRRFNLQVALFDAERFIESDASNPFEDAQLALVALEWLVDDEKAQDALFAAGWDLLVVDEAHHLVWHEDQVSAEYGLVEQLAQVIPGVLLLTATPEQLGQDSHFARLRLLDPNRFHDLAAFRAESEHYRPVAEAVQELLDEGRLSPKAHATILGFLGAEGEALLAAVSDGDTQASARLIRELLDRHGTGRVLFRNTRAAIQGFPERQLHPYPLPTPEQYRDLPAGEHAELYPEVAFQAQGEVADDERWWRFDPRVDWLIDTLKMLKRTKVLVICAHAETAMDLEDALRVRSGIPASVFHEGMSILERDRAAAYFADEEFGAQVLICSEIGSEGRNFQFAHHLVMFDLPAHPDLLEQRIGRLDRIGQKHTIQLHIPYLQDSPQERLFQWYHEGLNAFLNTCPTGNALQHQFGPRLLPLLEGGENKAWDTLVADARSERERLEAELHTGRDRLLELNSGGAGEGQALVEAILEQDDQFALPIYMETLFDAFGIDSEDHSENALILKPSEKMLDASFPLGDDEGVTITYDRGQALSREDMQFLTWEHPMVQGGMDLVLSGSMGNTAVALIKNKALKPGTVLLELLFVSEVVAPRSLQLGRYLPPAALRCLLDANGNDLASRVAFETLNDQLESVPRASANKFVQAQRDVLAKRISGGEEKILPAHNERVAEAQRRLAAEADEELARLVALQAVNPSVRDSEIDALRKRREDGLAMLEKAALRLEAIRVLVAG.

The Helicase ATP-binding domain occupies 164 to 332; the sequence is EVADRSAPRV…FARLRLLDPN (169 aa). 177 to 184 is a binding site for ATP; sequence DEVGLGKT. Positions 278-281 match the DEAH box motif; that stretch reads DEAH. The region spanning 473–627 is the Helicase C-terminal domain; the sequence is RVDWLIDTLK…TCPTGNALQH (155 aa).

The protein belongs to the SNF2/RAD54 helicase family. RapA subfamily. Interacts with the RNAP. Has a higher affinity for the core RNAP than for the holoenzyme. Its ATPase activity is stimulated by binding to RNAP.

Functionally, transcription regulator that activates transcription by stimulating RNA polymerase (RNAP) recycling in case of stress conditions such as supercoiled DNA or high salt concentrations. Probably acts by releasing the RNAP, when it is trapped or immobilized on tightly supercoiled DNA. Does not activate transcription on linear DNA. Probably not involved in DNA repair. This is RNA polymerase-associated protein RapA from Pseudomonas putida (strain ATCC 47054 / DSM 6125 / CFBP 8728 / NCIMB 11950 / KT2440).